A 495-amino-acid chain; its full sequence is Prenylcysteine oxidase 1-like (495 aa).

A signal peptide spans 1-22 (MARAAPLLAVLATVLTTAAAGG). N-linked (GlcNAc...) asparagine glycans are attached at residues N185 and N343.

It belongs to the prenylcysteine oxidase family. The cofactor is FAD.

It localises to the secreted. Functionally, likely to have oxidoreductase activity. Required in the mevalonate pathway to regulate prenylation and enhances the bactericidal activity of neutrophils. The sequence is that of Prenylcysteine oxidase 1-like (Pcyox1l) from Mus musculus (Mouse).